The following is a 463-amino-acid chain: Zinc finger protein PLAGL1 (463 aa).

7 consecutive C2H2-type zinc fingers follow at residues 4–26 (YPCQ…NYSH), 32–56 (YKCL…MATH), 62–84 (HQCA…LQTH), 91–113 (FGCE…LALH), 120–142 (LTCG…LKAH), 156–178 (HQCD…LVVH), and 184–207 (FLCQ…KKTH). The interval 285–310 (LHPVAPPTSPPQPLQNHKYNTSSTSY) is disordered. Positions 287–297 (PVAPPTSPPQP) are enriched in pro residues. Polar residues predominate over residues 298-310 (LQNHKYNTSSTSY).

This sequence belongs to the krueppel C2H2-type zinc-finger protein family. As to quaternary structure, interacts with THRSP.

It localises to the nucleus. Acts as a transcriptional activator. Involved in the transcriptional regulation of type 1 receptor for pituitary adenylate cyclase-activating polypeptide. This chain is Zinc finger protein PLAGL1 (PLAGL1), found in Sus scrofa (Pig).